Here is a 650-residue protein sequence, read N- to C-terminus: Threonine--tRNA ligase (650 aa).

The TGS domain occupies 1–66 (MVQITLPDGS…DQDAKLAIVT (66 aa)). The segment at 247-538 (DHRKIGRDLD…LIENHAGAMP (292 aa)) is catalytic. Zn(2+) is bound by residues C338, H389, and H515.

This sequence belongs to the class-II aminoacyl-tRNA synthetase family. Homodimer. Zn(2+) is required as a cofactor.

The protein resides in the cytoplasm. The enzyme catalyses tRNA(Thr) + L-threonine + ATP = L-threonyl-tRNA(Thr) + AMP + diphosphate + H(+). Catalyzes the attachment of threonine to tRNA(Thr) in a two-step reaction: L-threonine is first activated by ATP to form Thr-AMP and then transferred to the acceptor end of tRNA(Thr). Also edits incorrectly charged L-seryl-tRNA(Thr). The sequence is that of Threonine--tRNA ligase from Bordetella avium (strain 197N).